A 109-amino-acid chain; its full sequence is uncharacterized protein (109 aa).

Residues 26–48 (VTSIMTVSDINYLLLYLIILLTL) traverse the membrane as a helical segment.

It is found in the membrane. This is an uncharacterized protein from Saccharomyces cerevisiae (strain ATCC 204508 / S288c) (Baker's yeast).